Here is a 381-residue protein sequence, read N- to C-terminus: Chaperone protein DnaJ (381 aa).

The J domain occupies 5–70 (DFYEVLGVGR…QKKAAYDQYG (66 aa)). A CR-type zinc finger spans residues 136-214 (GCSKEIEVPT…CHGQGRKQKT (79 aa)). 8 residues coordinate Zn(2+): Cys149, Cys152, Cys166, Cys169, Cys188, Cys191, Cys202, and Cys205. CXXCXGXG motif repeat units lie at residues 149-156 (CDACDGSG), 166-173 (CGTCHGHG), 188-195 (CPTCHGKG), and 202-209 (CNVCHGQG).

Belongs to the DnaJ family. As to quaternary structure, homodimer. Requires Zn(2+) as cofactor.

The protein localises to the cytoplasm. Functionally, participates actively in the response to hyperosmotic and heat shock by preventing the aggregation of stress-denatured proteins and by disaggregating proteins, also in an autonomous, DnaK-independent fashion. Unfolded proteins bind initially to DnaJ; upon interaction with the DnaJ-bound protein, DnaK hydrolyzes its bound ATP, resulting in the formation of a stable complex. GrpE releases ADP from DnaK; ATP binding to DnaK triggers the release of the substrate protein, thus completing the reaction cycle. Several rounds of ATP-dependent interactions between DnaJ, DnaK and GrpE are required for fully efficient folding. Also involved, together with DnaK and GrpE, in the DNA replication of plasmids through activation of initiation proteins. This chain is Chaperone protein DnaJ, found in Vibrio cholerae serotype O1 (strain ATCC 39541 / Classical Ogawa 395 / O395).